The chain runs to 363 residues: NAD-dependent epimerase/dehydratase tndE (363 aa).

The helical transmembrane segment at 10-30 (GLVLITGVNGFLASHLALQLI) threads the bilayer. Position 176 (Y176) interacts with NADP(+).

The protein belongs to the NAD(P)-dependent epimerase/dehydratase family. Dihydroflavonol-4-reductase subfamily.

It localises to the membrane. The protein operates within secondary metabolite biosynthesis; terpenoid biosynthesis. Functionally, NAD-dependent epimerase/dehydratase; part of the gene cluster that mediates the biosynthesis of talaronoid C, a fusicoccane diterpenoid with an unprecedented tricyclic 5/8/6 ring system. The first step in the pathway is performed by the fusicoccadiene synthase tndC that possesses both prenyl transferase and terpene cyclase activity, converting isopentenyl diphosphate and dimethylallyl diphosphate into geranylgeranyl diphosphate (GGDP) and further converting GGDP into talarodiene, a precursor for talaronoid C. The remaining enzymes from the cluster include the cytochrome P450 monooxygenase tndB, the aldehyde reductase tndE and the alcohol dehydrogenase tndF that are involved in the conversion of talarodiene into talaronoid C. This Aspergillus flavipes protein is NAD-dependent epimerase/dehydratase tndE.